Here is a 585-residue protein sequence, read N- to C-terminus: Protein FAM151A (585 aa).

The chain crosses the membrane as a helical span at residues 14–34; it reads WVFAGITCVSVVVIAAIVLAI.

It belongs to the menorin family.

The protein resides in the membrane. The sequence is that of Protein FAM151A (FAM151A) from Homo sapiens (Human).